The chain runs to 251 residues: uncharacterized protein (251 aa).

This sequence to M.jannaschii MJ0638 and MJ1123 and M.tuberculosis Rv2003c.

This is an uncharacterized protein from Methanocaldococcus jannaschii (strain ATCC 43067 / DSM 2661 / JAL-1 / JCM 10045 / NBRC 100440) (Methanococcus jannaschii).